Here is a 56-residue protein sequence, read N- to C-terminus: Large ribosomal subunit protein bL32 (56 aa).

Residues 1-16 (MAVQKSKKSRSRRGMR) show a composition bias toward basic residues. A disordered region spans residues 1 to 38 (MAVQKSKKSRSRRGMRRSHDAVTPENLSVDPVSGETHR).

Belongs to the bacterial ribosomal protein bL32 family.

This is Large ribosomal subunit protein bL32 from Colwellia psychrerythraea (strain 34H / ATCC BAA-681) (Vibrio psychroerythus).